A 245-amino-acid chain; its full sequence is 1-(5-phosphoribosyl)-5-[(5-phosphoribosylamino)methylideneamino] imidazole-4-carboxamide isomerase (245 aa).

The active-site Proton acceptor is Asp7. Catalysis depends on Asp129, which acts as the Proton donor.

The protein belongs to the HisA/HisF family.

The protein resides in the cytoplasm. It carries out the reaction 1-(5-phospho-beta-D-ribosyl)-5-[(5-phospho-beta-D-ribosylamino)methylideneamino]imidazole-4-carboxamide = 5-[(5-phospho-1-deoxy-D-ribulos-1-ylimino)methylamino]-1-(5-phospho-beta-D-ribosyl)imidazole-4-carboxamide. It functions in the pathway amino-acid biosynthesis; L-histidine biosynthesis; L-histidine from 5-phospho-alpha-D-ribose 1-diphosphate: step 4/9. The sequence is that of 1-(5-phosphoribosyl)-5-[(5-phosphoribosylamino)methylideneamino] imidazole-4-carboxamide isomerase from Shewanella sp. (strain MR-7).